Consider the following 332-residue polypeptide: Formamidase (332 aa).

The CN hydrolase domain occupies 14–259; it reads FLTALIQYPV…WEIVTAEVYP (246 aa). Glutamate 60 acts as the Proton acceptor in catalysis. Lysine 132 functions as the Proton donor in the catalytic mechanism. The Nucleophile role is filled by cysteine 165.

The protein belongs to the carbon-nitrogen hydrolase superfamily. Aliphatic amidase family.

It carries out the reaction formamide + H2O = formate + NH4(+). Its function is as follows. Is an aliphatic amidase with a restricted substrate specificity, as it only hydrolyzes formamide. This Bacillus thuringiensis (strain Al Hakam) protein is Formamidase.